A 288-amino-acid polypeptide reads, in one-letter code: Male determiner protein Nix (288 aa).

3 RRM domains span residues 19-94 (YCIY…LPLS), 108-179 (IVVY…KVER), and 205-282 (RSIG…FVPE).

Its function is as follows. Male determiner protein (M-factor) that controls male somatic sexual differentiation. Acts as a dominant factor that regulates the mRNA splicing of doublesex (dsx) or fruitless (fru) transcripts and promotes expression of male splice forms of dsx and fru. The protein is Male determiner protein Nix of Aedes aegypti (Yellowfever mosquito).